The sequence spans 884 residues: Protein translocase subunit SecA (884 aa).

ATP is bound by residues Q83, G101 to T105, and D491.

The protein belongs to the SecA family.

It is found in the plastid. The protein localises to the chloroplast stroma. The protein resides in the chloroplast thylakoid membrane. The catalysed reaction is ATP + H2O + cellular proteinSide 1 = ADP + phosphate + cellular proteinSide 2.. Its function is as follows. Has a central role in coupling the hydrolysis of ATP to the transfer of proteins across the thylakoid membrane. This Pyropia yezoensis (Susabi-nori) protein is Protein translocase subunit SecA.